The sequence spans 490 residues: Probable malate:quinone oxidoreductase (490 aa).

It belongs to the MQO family. The cofactor is FAD.

It catalyses the reaction (S)-malate + a quinone = a quinol + oxaloacetate. The protein operates within carbohydrate metabolism; tricarboxylic acid cycle; oxaloacetate from (S)-malate (quinone route): step 1/1. The protein is Probable malate:quinone oxidoreductase of Corynebacterium jeikeium (strain K411).